The sequence spans 317 residues: Sulfate adenylyltransferase subunit 2 (317 aa).

2 disordered regions span residues 1 to 21 (MPDS…APLD) and 298 to 317 (RAID…EGYF).

The protein belongs to the PAPS reductase family. CysD subfamily. Heterodimer composed of CysD, the smaller subunit, and CysN.

The catalysed reaction is sulfate + ATP + H(+) = adenosine 5'-phosphosulfate + diphosphate. It participates in sulfur metabolism; hydrogen sulfide biosynthesis; sulfite from sulfate: step 1/3. Its function is as follows. With CysN forms the ATP sulfurylase (ATPS) that catalyzes the adenylation of sulfate producing adenosine 5'-phosphosulfate (APS) and diphosphate, the first enzymatic step in sulfur assimilation pathway. APS synthesis involves the formation of a high-energy phosphoric-sulfuric acid anhydride bond driven by GTP hydrolysis by CysN coupled to ATP hydrolysis by CysD. The chain is Sulfate adenylyltransferase subunit 2 from Rhizobium etli (strain CIAT 652).